The sequence spans 244 residues: 5'-nucleotidase SurE 2 (244 aa).

The a divalent metal cation site is built by Asp-8, Asp-9, Ser-39, and Asn-96.

This sequence belongs to the SurE nucleotidase family. It depends on a divalent metal cation as a cofactor.

The protein resides in the cytoplasm. It catalyses the reaction a ribonucleoside 5'-phosphate + H2O = a ribonucleoside + phosphate. Its function is as follows. Nucleotidase that shows phosphatase activity on nucleoside 5'-monophosphates. The protein is 5'-nucleotidase SurE 2 of Thermus thermophilus (strain ATCC BAA-163 / DSM 7039 / HB27).